Reading from the N-terminus, the 284-residue chain is UPF0354 protein SERP1303 (284 aa).

It belongs to the UPF0354 family.

In Staphylococcus epidermidis (strain ATCC 35984 / DSM 28319 / BCRC 17069 / CCUG 31568 / BM 3577 / RP62A), this protein is UPF0354 protein SERP1303.